Reading from the N-terminus, the 1031-residue chain is NACHT, LRR and PYD domains-containing protein 3 (1031 aa).

Residues Met-1 to Glu-93 form the Pyrin domain. A Phosphoserine modification is found at Ser-5. Tyr-13 carries the post-translational modification Phosphotyrosine. Cys-125 is lipidated: S-palmitoyl cysteine. The segment at Arg-126–Lys-129 is required for binding to phosphatidylinositol 4-phosphate (PtdIns4P). 3 positions are modified to phosphotyrosine: Tyr-131, Tyr-135, and Tyr-138. Positions Tyr-135–Asp-207 constitute an FISNA domain. Residue Ser-156 is modified to Phosphoserine. An ATP-binding site is contributed by Thr-164. Residues Ser-195 and Ser-198 each carry the phosphoserine modification. The region spanning His-217–Leu-533 is the NACHT domain. Gly-223–Thr-230 is a binding site for ATP. Residues Ser-262 and Ser-292 each carry the phosphoserine modification. Residue Lys-321 forms a Glycyl lysine isopeptide (Lys-Gly) (interchain with G-Cter in ubiquitin) linkage. Ser-331 bears the Phosphoserine mark. Positions Leu-352 to Gln-356 match the KFERQ-like motif 1 motif. Lys-427 participates in a covalent cross-link: Glycyl lysine isopeptide (Lys-Gly) (interchain with G-Cter in ubiquitin). His-519 is an ATP binding site. The short motif at Lys-601–Glu-605 is the KFERQ-like motif 2 element. A Glycyl lysine isopeptide (Lys-Gly) (interchain with G-Cter in ubiquitin) cross-link involves residue Lys-687. Residues Ser-723 and Ser-730 each carry the phosphoserine modification. LRR repeat units lie at residues Asn-737–Cys-757, Asn-766–Ser-787, Lys-794–Cys-814, Asn-823–Ser-844, and Ser-851–Cys-871. The short motif at Gln-793 to Glu-797 is the KFERQ-like motif 3 element. At Ser-801 the chain carries Phosphoserine. S-palmitoyl cysteine attachment occurs at residues Cys-832, Cys-833, and Cys-839. Tyr-856 bears the Phosphotyrosine mark. Lys-873 participates in a covalent cross-link: Glycyl lysine isopeptide (Lys-Gly) (interchain with G-Cter in ubiquitin). LRR repeat units lie at residues Asn-880–Ser-901, Asn-908–Glu-929, Lys-937–Thr-958, and Ser-965–Glu-986. Cys-953 carries S-palmitoyl cysteine lipidation. Residue Lys-968 forms a Glycyl lysine isopeptide (Lys-Gly) (interchain with G-Cter in ubiquitin) linkage. Residues Glu-986–Gln-990 carry the KFERQ-like motif 4 motif. The residue at position 1030 (Ser-1030) is a Phosphoserine.

The protein belongs to the NLRP family. Sensor component of NLRP3 inflammasomes; inflammasomes are supramolecular complexes that assemble in the cytosol in response to pathogens and other damage-associated signals and play critical roles in innate immunity and inflammation. The core of NLRP3 inflammasomes consists of a signal sensor component (NLRP3), an adapter (PYCARD/ASC), which recruits an effector pro-inflammatory caspase (CASP1 and, possibly, CASP4 and CASP5). Homodecamer; inactive NLRP3 forms homodecameric double-ring cages that hide pyrin domains within NACHT-LRR rings to avoid premature activation. Interacts (via pyrin domain) with PYCARD/ASC (via pyrin domain); interaction is direct. Interacts (via LRR repeat domain) with NEK7 (via N-terminus); the interaction is required for the formation of the complex NLRP3:PYCARD, oligomerization of PYCARD/ASC and activation of CASP1. Interacts (via LRR repeat domain) with NR4A1/Nur77 (via N-terminus); the interaction is direct, requires activation of NR4A1 by its ligands NBRE-containing dsDNA and lipopolysaccharide, and stimulates the association of NLRP3 with NEK7 for non-canonical NLRP3 inflammasome activation. Interacts with CARD8; leading to inhibit formation of the NLRP3 inflammasome. Interacts with MEFV; this interaction targets NLRP3 to degradation by autophagy, hence preventing excessive IL1B- and IL18-mediated inflammation. Interacts with EIF2AK2/PKR; this interaction requires EIF2AK2 activity, is accompanied by EIF2AK2 autophosphorylation and promotes inflammasome assembly in response to specific stimuli. Interacts with GBP5 (via DAPIN domain); this interaction promotes inflammasome assembly in response to microbial and soluble, but not crystalline, agents. Interacts with PML (isoform PML-1) (via the leucine-rich repeat (LRR) domain); PML-mediated increase in NLRP3 inflammasome activation does not depend upon this interaction. Interacts (via NACHT domain) with DHX33 (via DEAH box); NLRP3 activation in presence of cytosolic dsRNA is mediated by DHX33. Interacts (via NACHT and LRR domains) with ARRB2; this interaction is direct and inducible by polyunsaturated fatty acids (PUFAs). Interacts (via NACHT domain) with DDX3X under both LPS-primed and inflammasome-activating conditions. Interacts with IRF4 (via the LRR domain); this interaction is direct and is required for optimal IRF4 binding to IL4 promoter and efficient IL4 transactivation during differentiation of Th2 helper T-cells. Interacts with MAVS; promoting localization to mitochondria and activation of the NLRP3 inflammasome. Interacts with MARK4; promoting localization of NLRP3 to the microtubule organizing center (MTOC). Interacts with TRIM50; this interaction also promotes NLRP3 oligomerization and subsequent inflammasome activation. Interacts with IRGM; preventing NLRP3 inflammasome assembly and promoting NLRP3 degradation. Interacts (via KFERQ-like motifs) with HSPA8/HSC70; promoting NLRP3 degradation by the chaperone-mediated autophagy pathway. Interacts (via NACHT and LLR domains) with ABHD8; this interaction is enhanced in the presence of NLRP3 inflammasome inducers, such as ATP, nigericin, silica, or alum. Interaction with ABHD8 leads the recruitment of ZDHHC12, hence facilitating NLRP3 palmitoylation and degradation by the chaperone-mediated autophagy pathway (CMA), therefore attenuating NLRP3 inflammasome activation. In terms of processing, phosphorylation at Ser-198 by MAPK8/JNK1 increases inflammasome activation by promoting deubiquitination by BRCC3 and NLRP3 homooligomerization. Phosphorylation at Ser-801 by CSNK1A1 prevents inflammasome activation by preventing NEK7 recruitment. Phosphorylation at Ser-5 in the pyrin domain inhibits homomultimerization of NLRP3 and activation of the NLRP3 inflammasome: dephosphorylation by protein phosphatase 2A (PP2A) promotes assembly of the NLRP3 inflammasome. Phosphorylation at Ser-292 by PKD/PRKD1 promotes NLRP3 inflammasome assembly. Phosphorylation by ERK1/MAPK3 promotes NLRP3 inflammasome assembly. Phosphorylation by BTK (at Tyr-131, Tyr-135 and Tyr-138) in the region that mediates binding to phosphatidylinositol phosphate, promotes relocalization of NLRP3 and assembly of the NLRP3 inflammasome. Phosphorylation at Tyr-856 inhibits NLRP3 inflammasome assembly: dephosphorylation by PTPN22 promotes inflammasome activation. Phosphorylated by LATS1 and LATS2 at Ser-262 following palmitoylation by ZDHHC1, promoting its relocalization to the microtubule organizing center (MTOC), where NLRP3 is activated by NEK7, leading to inflammasome assembly and activation. Post-translationally, ubiquitinated; undergoes both 'Lys-48'- and 'Lys-63'-linked polyubiquitination. Ubiquitination does not lead to degradation, but inhibits inflammasome activation. Deubiquitination is catalyzed by BRCC3 and associated with NLRP3 activation and inflammasome assembly. This process can be induced by the activation of Toll-like receptors (by LPS), through a non-transcriptional pathway dependent on the mitochondrial production of reactive oxygen species, and by ATP. Ubiquitinated by TRIM31 via 'Lys-48'-linked ubiquitination, leading to its degradation by the proteasome. Ubiquitinated at Lys-687 by the SCF(FBXL2) complex, leading to its degradation by the proteasome. Ubiquitinated by TRIM35 via 'lys-48' and 'Lys-63'-linked ubiquitination leading to inhibition of NLRP3 inflammasome activation. Undergoes 'Lys-27'-linked polyubiquitination by MARCHF5, leading to NLRP3-NEK7 complex formation and NLRP3 oligomerization. Palmitoylation by ZDHHC12 promotes NLRP3 degradation by the chaperone-mediated autophagy pathway (CMA) and therefore limits NLRP3 inflammasome activation. Interaction with ZDHHC12, and hence NLRP3 palmitoylation, is greatly enhanced by ABHD8. Following palmitoylation, HSPA8/HSC70 recognizes and binds the KFERQ-like motifs on NLRP3 and promotes NLRP3 recruitment to lysosomes, where it is degraded via the chaperone-mediated autophagy pathway in a LAMP2-dependent process. Palmitoylation at Cys-832 and Cys-833 by ZDHHC5 enhances its binding to NEK7 leading to inflammasome assembly and activation. Palmitoylation at Cys-125 and Cys-953 by ZDHHC1 facilitates phosphorylation at Ser-262 by LATS1 and LATS2, promoting its relocalization to the microtubule organizing center (MTOC), where NLRP3 is activated by NEK7, leading to inflammasome assembly and activation. Depalmitoylated by ABHD17A. In terms of processing, degraded via selective autophagy following interaction with IRGM. IRGM promotes NLRP3 recruitment to autophagosome membranes, promoting its SQSTM1/p62-dependent autophagy-dependent degradation.

The protein localises to the cytoplasm. The protein resides in the cytosol. It is found in the inflammasome. Its subcellular location is the cytoskeleton. It localises to the microtubule organizing center. The protein localises to the golgi apparatus membrane. The protein resides in the endoplasmic reticulum. It is found in the mitochondrion. Its subcellular location is the secreted. It localises to the nucleus. It carries out the reaction ATP + H2O = ADP + phosphate + H(+). Under resting conditions, NLRP3 binds ADP and is autoinhibited. Inactive NLRP3 forms homodecameric double-ring cages that hide pyrin domains within NACHT-LRR rings to avoid premature activation. NLRP3 activation stimuli include extracellular ATP, nigericin, reactive oxygen species, crystals of monosodium urate or cholesterol, amyloid-beta fibers, environmental or industrial particles and nanoparticles, such as asbestos, silica, aluminum salts, cytosolic dsRNA, etc. Almost all stimuli trigger intracellular K(+) efflux. These stimuli lead to membrane perturbations that induce activation of NLRP3. Upon activation, NLRP3 is transported to microtubule organizing center (MTOC), where it is unlocked by NEK7, leading to its relocalization to dispersed trans-Golgi network (dTGN) vesicle membranes and recruitment of PYCARD/ASC for the formation of an active inflammasome complex. NEK7-activated NLRP3 forms a disk-shaped inflammasome. NLRP3 and PYCARD/ASC interact via their respective pyrin domains; interaction initiates speck formation (nucleation) which greatly enhances further addition of soluble PYCARD/ASC molecules to the speck in a prion-like polymerization process. Clustered PYCARD/ASC nucleates the formation of CASP1 filaments through the interaction of their respective CARD domains, acting as a platform for CASP1 polymerization and activation. Active CASP1 then processes IL1B and IL18 precursors, leading to the release of mature cytokines in the extracellular milieu and inflammatory response. NLRP3 inflammasome assembly is inhibited by IRGM, which impedes NLRP3 oligomerization. NLRP3 inflammasome is inhibited by cyclic AMP (cAMP), which directly binds NLRP3; inhibition is relieved by calcium-sensing receptor CASR, which inhibits production of cAMP. Specifically inhibited by sulfonylurea MCC950 (also named CP-456,773, CRID3), a potent and specific small-molecule inhibitor of the NLRP3 inflammasome that acts by preventing ATP hydrolysis. In terms of biological role, sensor component of the NLRP3 inflammasome, which mediates inflammasome activation in response to defects in membrane integrity, leading to secretion of inflammatory cytokines IL1B and IL18 and pyroptosis. In response to pathogens and other damage-associated signals that affect the integrity of membranes, initiates the formation of the inflammasome polymeric complex composed of NLRP3, CASP1 and PYCARD/ASC. Recruitment of pro-caspase-1 (proCASP1) to the NLRP3 inflammasome promotes caspase-1 (CASP1) activation, which subsequently cleaves and activates inflammatory cytokines IL1B and IL18 and gasdermin-D (GSDMD), promoting cytokine secretion and pyroptosis. Activation of NLRP3 inflammasome is also required for HMGB1 secretion; stimulating inflammatory responses. Under resting conditions, ADP-bound NLRP3 is autoinhibited. NLRP3 activation stimuli include extracellular ATP, nigericin, reactive oxygen species, crystals of monosodium urate or cholesterol, amyloid-beta fibers, environmental or industrial particles and nanoparticles, such as asbestos, silica, aluminum salts, cytosolic dsRNA, etc. Almost all stimuli trigger intracellular K(+) efflux. These stimuli lead to membrane perturbation and activation of NLRP3. Upon activation, NLRP3 is transported to microtubule organizing center (MTOC), where it is unlocked by NEK7, leading to its relocalization to dispersed trans-Golgi network (dTGN) vesicle membranes and formation of an active inflammasome complex. Associates with dTGN vesicle membranes by binding to phosphatidylinositol 4-phosphate (PtdIns4P). Shows ATPase activity. Functionally, independently of inflammasome activation, regulates the differentiation of T helper 2 (Th2) cells and has a role in Th2 cell-dependent asthma and tumor growth. During Th2 differentiation, required for optimal IRF4 binding to IL4 promoter and for IRF4-dependent IL4 transcription. Binds to the consensus DNA sequence 5'-GRRGGNRGAG-3'. May also participate in the transcription of IL5, IL13, GATA3, CCR3, CCR4 and MAF. In Bos taurus (Bovine), this protein is NACHT, LRR and PYD domains-containing protein 3 (NLRP3).